Consider the following 331-residue polypeptide: uncharacterized protein (331 aa).

To bacterial alkanal monooxygenase alpha and beta chains.

This is an uncharacterized protein from Bacillus subtilis (strain 168).